Reading from the N-terminus, the 466-residue chain is 3-isopropylmalate dehydratase large subunit (466 aa).

Residues C347, C407, and C410 each coordinate [4Fe-4S] cluster.

Belongs to the aconitase/IPM isomerase family. LeuC type 1 subfamily. Heterodimer of LeuC and LeuD. It depends on [4Fe-4S] cluster as a cofactor.

The enzyme catalyses (2R,3S)-3-isopropylmalate = (2S)-2-isopropylmalate. It functions in the pathway amino-acid biosynthesis; L-leucine biosynthesis; L-leucine from 3-methyl-2-oxobutanoate: step 2/4. Its function is as follows. Catalyzes the isomerization between 2-isopropylmalate and 3-isopropylmalate, via the formation of 2-isopropylmaleate. The sequence is that of 3-isopropylmalate dehydratase large subunit from Enterobacter sp. (strain 638).